The sequence spans 412 residues: Argininosuccinate synthase (412 aa).

Residues A10 to S18 and A36 contribute to the ATP site. Positions 87 and 92 each coordinate L-citrulline. Residue S115–N123 coordinates ATP. The L-aspartate site is built by T119, N123, and D124. N123 contacts L-citrulline. Residues R127, S180, S189, E270, and Y282 each coordinate L-citrulline.

This sequence belongs to the argininosuccinate synthase family. As to quaternary structure, homotetramer.

It catalyses the reaction L-citrulline + L-aspartate + ATP = 2-(N(omega)-L-arginino)succinate + AMP + diphosphate + H(+). The protein operates within amino-acid biosynthesis; L-arginine biosynthesis; L-arginine from L-ornithine and carbamoyl phosphate: step 2/3. It participates in nitrogen metabolism; urea cycle; (N(omega)-L-arginino)succinate from L-aspartate and L-citrulline: step 1/1. The chain is Argininosuccinate synthase from Aedes aegypti (Yellowfever mosquito).